We begin with the raw amino-acid sequence, 1436 residues long: MWSLTANEDESTTAHFFLGAGDEGLGTCGIGMRTEESDSELLEDEEDEVPPEPQIIVGICAMTKKSKSKPMTQILERLCRFDYLTVVILGEDVILNEPVENWPSCHCLISFHSKGFPLDKAVAYSKLRNPFLINDLAMQYYIQDRREVYRILQEEGIDLPRYAVLNRDPACPEECSLIEGEDQVEVNGAVFPKPFVEKPVSAEDHNVYIYYPSSAGGGSQRLFRKIGSRSSVYSPESSVRKTGSYIYEEFMPTDGTDVKVYTVGPDYAHAEARKSPALDGKVERDSEGKEVRYPVMLTAMEKLVARKVCVAFKQTVCGFDLLRANGHSFVCDVNGFSFVKNSMKYYDDCAKILGNTIMRELAPQFQIPWSIPTEAEDIPIVPTTSGTMMELRCVIAIIRHGDRTPKQKMKMEVTHPRFFALFEKHGGYKTGKLKLKRPEQLQEVLDITRLLLAELEKEPEAEIEEKTGKLEQLKSVLEMYGHFSGINRKVQLTYYPHGVKASNEGQDLQREPLAPSLLLVLKWGGELTPDGRVQAEELGRAFRCMYPGGQGDYAGFPGCGLLRLHSTFRHDLKIYASDEGRVQMTAAAFAKGLLALEGELTPILVQMVKSANMNGLLDSDSDSLSSCQHRVKARLHHILQQDAPFGPEDYDQLAPTGSTSLLNSMSVIQNPVKVCDQVFALIENLTHQIRERMQDPSSVDLQLYHSETLELMLQRWSKLERDFRQKSGRYDISKIPDIYDCVKYDVQHNGSLGLQGTAELLRLSKALADVVIPQEYGISREEKVEIAVGFCLPLLRKILLDLQRTHEDESVNKLHPLYSRGVLSPGRHVRTRLYFTSESHVHSLLSVFRYGGLLDETQDAQWQRALAYLSAISELNYMTQIVIMLYEDNTRDPLSEERFHVELHFSPGVKGVEEGSAPAGCGFRPASSENEEMKTDPGSIENLCPGKASDEPDRALQTSPQPVEGTGLPRRSPLIRNRKAGSMEVLSETSSSRPGGYRLFSSSRPPTEMKQSGLGSQCTGLFSTTVLGGSSSAPNLQDYARTHGKKLPPASLKHRDELLFVPAVKRFSVSFAKHPTNGFEGCSMVPTIYPLETLHNALSLRQVSEFLTKVCQRHTDAHAQASAALFDSMHNHQASDSPFSPPRTLHSPPLQLRHRSEKPPWYSSGPSSTVSSAGPSSPTTVDGNSHFGFSDQSSVNIHMTEEKQGFGLLQETPGDGTRELHIERQQELVEPAQSPQELPVEICPSGSQGVTKVSQTCQEVPDIVQPCHNIHEEIGQPQQEVPDISQLLLKDHDTTTNTCHLCQASQLSQKVCEEICQLCQDNHEESNQLCQEVSVKLGRMVHGFPVNVDSTAQETLMEIGRPTQEIPEDPYQEFSVKVGVLAQKAPAISELSQDIPEADKPSQELSEETELQAQEVSEEIDQESEVVDELPPEAIS.

64–65 (KK) contributes to the substrate binding site. ATP-binding positions include R145, K198, H205, R224, 248-251 (EEFM), and 257-259 (DVK). Residue 224 to 225 (RK) participates in substrate binding. Substrate is bound by residues K259 and R273. ATP contacts are provided by residues S275, D320, and 332–334 (DVN). Substrate is bound at residue 337-340 (SFVK). Positions 382–453 (PTTSGTMMEL…VLDITRLLLA (72 aa)) are polyphosphoinositide-binding domain. The segment at 915–998 (GSAPAGCGFR…TSSSRPGGYR (84 aa)) is disordered. A phosphoserine mark is found at S939, S982, S1032, S1068, S1140, and S1147. Disordered regions lie at residues 1131–1191 (NHQA…GFSD) and 1389–1436 (SELS…EAIS). Positions 1163–1181 (SSGPSSTVSSAGPSSPTTV) are enriched in low complexity. Positions 1405 to 1436 (LSEETELQAQEVSEEIDQESEVVDELPPEAIS) are enriched in acidic residues.

This sequence belongs to the histidine acid phosphatase family. VIP1 subfamily.

It localises to the cytoplasm. Its subcellular location is the cytosol. The protein resides in the cell membrane. It carries out the reaction 1D-myo-inositol hexakisphosphate + ATP = 1-diphospho-1D-myo-inositol 2,3,4,5,6-pentakisphosphate + ADP. It catalyses the reaction 5-diphospho-1D-myo-inositol 1,2,3,4,6-pentakisphosphate + ATP + H(+) = 1,5-bis(diphospho)-1D-myo-inositol 2,3,4,6-tetrakisphosphate + ADP. Bifunctional inositol kinase that acts in concert with the IP6K kinases IP6K1, IP6K2 and IP6K3 to synthesize the diphosphate group-containing inositol pyrophosphates diphosphoinositol pentakisphosphate, PP-InsP5, and bis-diphosphoinositol tetrakisphosphate, (PP)2-InsP4. PP-InsP5 and (PP)2-InsP4, also respectively called InsP7 and InsP8, regulate a variety of cellular processes, including apoptosis, vesicle trafficking, cytoskeletal dynamics, exocytosis, insulin signaling and neutrophil activation. Phosphorylates inositol hexakisphosphate (InsP6) at position 1 to produce PP-InsP5 which is in turn phosphorylated by IP6Ks to produce (PP)2-InsP4. Alternatively, phosphorylates PP-InsP5 at position 1, produced by IP6Ks from InsP6, to produce (PP)2-InsP4. Activated when cells are exposed to hyperosmotic stress. This Mus musculus (Mouse) protein is Inositol hexakisphosphate and diphosphoinositol-pentakisphosphate kinase 1.